Reading from the N-terminus, the 411-residue chain is Probable UDP-arabinose 4-epimerase 3 (411 aa).

Over residues 1–13 (MLSFSRARSQGRN) the composition is skewed to polar residues. The interval 1 to 22 (MLSFSRARSQGRNTRPLGGGME) is disordered. Over 1-31 (MLSFSRARSQGRNTRPLGGGMEYLEPKRKSN) the chain is Cytoplasmic. A helical; Signal-anchor for type II membrane protein membrane pass occupies residues 32–50 (VMGKIILVVSLTALCIFML). Residues 51 to 411 (KHAPSFTSPT…KTHPHGYASS (361 aa)) lie on the Lumenal side of the membrane. 71–102 (HVLVTGGAGYIGSHAALRLLKDSYRVTIVDNL) contacts NAD(+). The active-site Proton acceptor is the Tyr-219.

Belongs to the NAD(P)-dependent epimerase/dehydratase family. Requires NAD(+) as cofactor.

It is found in the golgi apparatus. The protein localises to the golgi stack membrane. It carries out the reaction UDP-beta-L-arabinopyranose = UDP-alpha-D-xylose. The protein operates within nucleotide-sugar biosynthesis; UDP-L-arabinose biosynthesis; UDP-L-arabinose from UDP-alpha-D-xylose: step 1/1. It participates in cell wall biogenesis; cell wall polysaccharide biosynthesis. This is Probable UDP-arabinose 4-epimerase 3 from Arabidopsis thaliana (Mouse-ear cress).